A 513-amino-acid polypeptide reads, in one-letter code: Cytochrome P450 72A552 (513 aa).

The helical transmembrane segment at 2 to 22 (EISVASVTVSVVIAVVTWWVW) threads the bilayer. Cys460 contacts heme.

It belongs to the cytochrome P450 family. The cofactor is heme.

The protein resides in the membrane. The enzyme catalyses oleanolate + reduced [NADPH--hemoprotein reductase] + O2 = hederagenin + oxidized [NADPH--hemoprotein reductase] + H2O + H(+). Catalyzes the oxidation of oleanolate at the C-23 position to form hederagenin. This Barbarea vulgaris (Yellow rocket) protein is Cytochrome P450 72A552.